A 160-amino-acid chain; its full sequence is 2-C-methyl-D-erythritol 2,4-cyclodiphosphate synthase (160 aa).

The a divalent metal cation site is built by Asp9 and His11. Residues 9–11 (DVH) and 35–36 (HS) each bind 4-CDP-2-C-methyl-D-erythritol 2-phosphate. His43 contacts a divalent metal cation. Residues 57-59 (DIG), 62-66 (FPDTD), 101-107 (AQKPKMA), 133-136 (TTTE), Phe140, and Arg143 each bind 4-CDP-2-C-methyl-D-erythritol 2-phosphate.

Belongs to the IspF family. In terms of assembly, homotrimer. It depends on a divalent metal cation as a cofactor.

The catalysed reaction is 4-CDP-2-C-methyl-D-erythritol 2-phosphate = 2-C-methyl-D-erythritol 2,4-cyclic diphosphate + CMP. It functions in the pathway isoprenoid biosynthesis; isopentenyl diphosphate biosynthesis via DXP pathway; isopentenyl diphosphate from 1-deoxy-D-xylulose 5-phosphate: step 4/6. Involved in the biosynthesis of isopentenyl diphosphate (IPP) and dimethylallyl diphosphate (DMAPP), two major building blocks of isoprenoid compounds. Catalyzes the conversion of 4-diphosphocytidyl-2-C-methyl-D-erythritol 2-phosphate (CDP-ME2P) to 2-C-methyl-D-erythritol 2,4-cyclodiphosphate (ME-CPP) with a corresponding release of cytidine 5-monophosphate (CMP). The polypeptide is 2-C-methyl-D-erythritol 2,4-cyclodiphosphate synthase (Geobacillus thermodenitrificans (strain NG80-2)).